A 340-amino-acid chain; its full sequence is MGLNLKDLVVREKTTLEAFSNKVIAIDAYNAIYQFLASIRGPDGLQLSDSEGRITSHLSGLLYRNVNFLSLGIKPVYVFDGKPPSLKTAEIERRKQIKMDATIKYEKAIADGNMEDARKYAQQTTSMKDGMVKESKQLLTYFGIPYIEAPSEGEATAAHLTNTGQAYASASQDFDSILCGAKRLVRNFTNSGRRKIPNKNTYIDIVPEIIETQKTLDSLELTREELIDVGILIGTDFNPNGFERVGPKTALKMIKQHSKLEEIPQIQEQLEEIDYQEIRKIFLNPEVADVKEIVFENVNYEGMSNYLVRERSFSEDRVNSTLNRLKKALEKKSQNLDQWF.

The tract at residues Met-1–Lys-98 is N-domain. Residues Asp-27, Asp-80, Glu-152, Glu-154, Asp-173, Asp-175, and Asp-236 each contribute to the Mg(2+) site. The I-domain stretch occupies residues Asp-116–Ser-258.

This sequence belongs to the XPG/RAD2 endonuclease family. FEN1 subfamily. As to quaternary structure, interacts with PCNA. PCNA stimulates the nuclease activity without altering cleavage specificity. Requires Mg(2+) as cofactor.

Its function is as follows. Structure-specific nuclease with 5'-flap endonuclease and 5'-3' exonuclease activities involved in DNA replication and repair. During DNA replication, cleaves the 5'-overhanging flap structure that is generated by displacement synthesis when DNA polymerase encounters the 5'-end of a downstream Okazaki fragment. Binds the unpaired 3'-DNA end and kinks the DNA to facilitate 5' cleavage specificity. Cleaves one nucleotide into the double-stranded DNA from the junction in flap DNA, leaving a nick for ligation. Also involved in the base excision repair (BER) pathway. Acts as a genome stabilization factor that prevents flaps from equilibrating into structures that lead to duplications and deletions. Also possesses 5'-3' exonuclease activity on nicked or gapped double-stranded DNA. This Nitrosopumilus maritimus (strain SCM1) protein is Flap endonuclease 1.